The primary structure comprises 732 residues: Nephrocystin-1 (732 aa).

Residues 3-105 (ARRQRDPLQA…LQGLAVTISR (103 aa)) are a coiled coil. Residue Y46 is modified to Phosphotyrosine; by FAK2. Disordered stretches follow at residues 103-153 (ISRE…KWST) and 205-244 (TYLE…KQRT). Composition is skewed to acidic residues over residues 115–145 (TEEE…EKEE) and 210–236 (YSEE…ETAD). S121, S123, and S126 each carry phosphoserine; by CK2. A coiled-coil region spans residues 127–150 (EDSGGEEEDAEEEEEEKEENESHK). The 61-residue stretch at 152–212 (STGEEYIAVG…PRTYLEPYSE (61 aa)) folds into the SH3 domain. A Phosphotyrosine; by FAK2 modification is found at Y349. A Phosphotyrosine; by SRC modification is found at Y721.

Belongs to the nephrocystin-1 family. As to quaternary structure, interacts with BCAR1, PTK2B/PYK2 and tensin. Interacts with INVS and NPHP3. Interacts with PACS1; the interaction is dependent on NPHP1 phosphorylation by CK2. Interacts with KIF7. Interacts with AHI1 and TNK2. Interacts with NPHP4 in a complex containing NPHP1, NPHP4 and RPGRIP1L. Interacts with IQCB1; the interaction likely requires additional interactors. Interacts with ANKS3. Interacts with SPATA7. Interacts with FLNA. Post-translationally, phosphorylation by CK2 is required for the interaction with PACS1 and the targeting to the base region of cilia. Widespread expression, with highest levels in pituitary gland, spinal cord, thyroid gland, testis, skeletal muscle, lymph node and trachea. Weakly expressed in heart, kidney and pancreas. Expressed in nasal epithelial cells (at protein level). Expressed in the renal collecting duct (at protein level).

It localises to the cell junction. It is found in the adherens junction. The protein resides in the cell projection. Its subcellular location is the cilium. The protein localises to the cytoplasm. It localises to the cytoskeleton. It is found in the cilium axoneme. The protein resides in the tight junction. Its function is as follows. Together with BCAR1 it may play a role in the control of epithelial cell polarity. Involved in the organization of apical junctions in kidney cells together with NPHP4 and RPGRIP1L/NPHP8. Does not seem to be strictly required for ciliogenesis. Seems to help to recruit PTK2B/PYK2 to cell matrix adhesions, thereby initiating phosphorylation of PTK2B/PYK2 and PTK2B/PYK2-dependent signaling. May play a role in the regulation of intraflagellar transport (IFT) during cilia assembly. Required for normal retina development. In connecting photoreceptor cilia influences the movement of some IFT proteins such as IFT88 and WDR19. Involved in spermatogenesis. This Homo sapiens (Human) protein is Nephrocystin-1 (NPHP1).